The following is a 191-amino-acid chain: Penicillin-binding protein activator LpoB (191 aa).

An N-terminal signal peptide occupies residues 1 to 16 (MKRYLSLALAALVLTG). Residue Cys17 is the site of N-palmitoyl cysteine attachment. Cys17 is lipidated: S-diacylglycerol cysteine.

Belongs to the LpoB family. Interacts with PBP1b.

The protein resides in the cell outer membrane. Its function is as follows. Regulator of peptidoglycan synthesis that is essential for the function of penicillin-binding protein 1B (PBP1b). The protein is Penicillin-binding protein activator LpoB of Yersinia pestis (strain D182038).